The primary structure comprises 98 residues: Cystatin-B (98 aa).

Met-1 carries the N-acetylmethionine modification. The Secondary area of contact motif lies at 46–50 (QIVAG).

This sequence belongs to the cystatin family. Widely expressed. Highest expression in heart, liver and kidney. Lower levels in brain, lung and skeletal muscle. Lowest levels in spleen and testis.

The protein localises to the cytoplasm. This is an intracellular thiol proteinase inhibitor. The polypeptide is Cystatin-B (Cstb) (Mus musculus (Mouse)).